The primary structure comprises 152 residues: Acyl carrier protein, mitochondrial (152 aa).

The region spanning 73–148 (KLINERVLLV…DIIKYVADKE (76 aa)) is the Carrier domain. S108 is modified (O-(pantetheine 4'-phosphoryl)serine).

The protein belongs to the acyl carrier protein (ACP) family. Complex I is composed of about 45 different subunits.

The protein resides in the mitochondrion. Its function is as follows. Carrier of the growing fatty acid chain in fatty acid biosynthesis. Accessory and non-catalytic subunit of the mitochondrial membrane respiratory chain NADH dehydrogenase (Complex I), which functions in the transfer of electrons from NADH to the respiratory chain. This Drosophila melanogaster (Fruit fly) protein is Acyl carrier protein, mitochondrial.